The primary structure comprises 956 residues: Translation initiation factor IF-2 (956 aa).

A disordered region spans residues 33–370; it reads SHASSVEEAD…PVTERKFHEL (338 aa). Residues 46–60 show a composition bias toward polar residues; the sequence is IASSFSAGVTKNVQA. Positions 63-73 are enriched in basic and acidic residues; it reads AKDKQVAEQKA. Residues 76 to 100 are compositionally biased toward low complexity; sequence AKATTPQPAASKAAEKPAAATQEAS. Composition is skewed to basic and acidic residues over residues 112–125, 134–143, and 179–192; these read FKAEREARAKEQVA, SNDRKSDYRQ, and NDGHRQAGNRDKNR. Over residues 199 to 213 the composition is skewed to low complexity; it reads RQQDTGRQGQTQAGA. Composition is skewed to basic and acidic residues over residues 234-258 and 266-276; these read ARQRESRFREQEEAKRLEQQARQEA and QTEDKKHREAS. Over residues 277-293 the composition is skewed to low complexity; it reads AKATESVASMAAASVAK. A compositionally biased stretch (basic and acidic residues) spans 303-320; it reads NRPDKGHDRDHGLEDGQK. A compositionally biased stretch (low complexity) spans 325 to 343; it reads SWNSQNQVRNQKNSNWNNN. Basic residues predominate over residues 344-354; sequence KKNKKGKHHKN. Residues 457-626 form the tr-type G domain; it reads ERAPVVTIMG…LLVAEVEELK (170 aa). Positions 466–473 are G1; that stretch reads GHVDHGKT. 466 to 473 is a GTP binding site; that stretch reads GHVDHGKT. Residues 491 to 495 form a G2 region; the sequence is GITQH. Residues 512-515 form a G3 region; sequence DTPG. Residues 512–516 and 566–569 each bind GTP; these read DTPGH and NKID. Positions 566-569 are G4; sequence NKID. The G5 stretch occupies residues 602 to 604; that stretch reads SAK.

It belongs to the TRAFAC class translation factor GTPase superfamily. Classic translation factor GTPase family. IF-2 subfamily.

Its subcellular location is the cytoplasm. One of the essential components for the initiation of protein synthesis. Protects formylmethionyl-tRNA from spontaneous hydrolysis and promotes its binding to the 30S ribosomal subunits. Also involved in the hydrolysis of GTP during the formation of the 70S ribosomal complex. This is Translation initiation factor IF-2 from Streptococcus equi subsp. equi (strain 4047).